The sequence spans 263 residues: Ribosomal RNA small subunit methyltransferase A (263 aa).

S-adenosyl-L-methionine-binding residues include Asn20, Leu22, Gly47, Glu68, Asp90, and Asn110.

This sequence belongs to the class I-like SAM-binding methyltransferase superfamily. rRNA adenine N(6)-methyltransferase family. RsmA subfamily.

Its subcellular location is the cytoplasm. The catalysed reaction is adenosine(1518)/adenosine(1519) in 16S rRNA + 4 S-adenosyl-L-methionine = N(6)-dimethyladenosine(1518)/N(6)-dimethyladenosine(1519) in 16S rRNA + 4 S-adenosyl-L-homocysteine + 4 H(+). Functionally, specifically dimethylates two adjacent adenosines (A1518 and A1519) in the loop of a conserved hairpin near the 3'-end of 16S rRNA in the 30S particle. May play a critical role in biogenesis of 30S subunits. In Chlorobium limicola (strain DSM 245 / NBRC 103803 / 6330), this protein is Ribosomal RNA small subunit methyltransferase A.